Consider the following 650-residue polypeptide: Aminopeptidase B (650 aa).

A Phosphoserine modification is found at S7. Residue 298–302 (GGMEN) participates in substrate binding. H325 provides a ligand contact to Zn(2+). Catalysis depends on E326, which acts as the Proton acceptor. Zn(2+)-binding residues include H329 and E348. K446 is subject to N6-acetyllysine.

The protein belongs to the peptidase M1 family. Monomer. Requires Zn(2+) as cofactor. In terms of tissue distribution, widely expressed.

It is found in the secreted. The enzyme catalyses Release of N-terminal Arg and Lys from oligopeptides when P1' is not Pro. Also acts on arylamides of Arg and Lys.. In terms of biological role, exopeptidase which selectively removes arginine and/or lysine residues from the N-terminus of several peptide substrates including Arg(0)-Leu-enkephalin, Arg(0)-Met-enkephalin and Arg(-1)-Lys(0)-somatostatin-14. Can hydrolyze leukotriene A4 (LTA-4) into leukotriene B4 (LTB-4). This Rattus norvegicus (Rat) protein is Aminopeptidase B (Rnpep).